We begin with the raw amino-acid sequence, 504 residues long: UDP-GalNAc:beta-1,3-N-acetylgalactosaminyltransferase 2 (504 aa).

At 1-3 the chain is on the cytoplasmic side; the sequence is MRN. The helical; Signal-anchor for type II membrane protein transmembrane segment at 4–24 threads the bilayer; that stretch reads WLVLLCPCVLGAALHLWHLWL. The Lumenal segment spans residues 25 to 504; sequence RSPPDPHNTG…DPCQCEAKVR (480 aa). Residues Asn-117 and Asn-176 are each glycosylated (N-linked (GlcNAc...) asparagine).

This sequence belongs to the glycosyltransferase 31 family. In terms of processing, N-glycosylated. In terms of tissue distribution, present in testis (at protein level). In testis, it is mainly detected in the middle layers of seminiferous tubules at stages XII to II. Strongly expressed in primary and secondary spermatocytes and early round spermatids, but not in spermatogonia, elongating or elongated spermatids, or in Leydig or Sertoli cells.

It is found in the golgi apparatus membrane. The protein localises to the endoplasmic reticulum. The enzyme catalyses 3-O-(N-acetyl-beta-D-glucosaminyl-(1-&gt;4)-alpha-D-mannosyl)-L-threonyl-[protein] + UDP-N-acetyl-alpha-D-galactosamine = 3-O-[beta-D-GalNAc-(1-&gt;3)-beta-D-GlcNAc-(1-&gt;4)-alpha-D-Man]-L-Thr-[protein] + UDP + H(+). Its pathway is protein modification; protein glycosylation. In terms of biological role, beta-1,3-N-acetylgalactosaminyltransferase that synthesizes a unique carbohydrate structure, GalNAc-beta-1-3GlcNAc, on N- and O-glycans. Has no galactose nor galactosaminyl transferase activity toward any acceptor substrate. Involved in alpha-dystroglycan (DAG1) glycosylation: acts coordinately with GTDC2/POMGnT2 to synthesize a GalNAc-beta3-GlcNAc-beta-terminus at the 4-position of protein O-mannose in the biosynthesis of the phosphorylated O-mannosyl trisaccharide (N-acetylgalactosamine-beta-3-N-acetylglucosamine-beta-4-(phosphate-6-)mannose), a carbohydrate structure present in alpha-dystroglycan, which is required for binding laminin G-like domain-containing extracellular proteins with high affinity. This chain is UDP-GalNAc:beta-1,3-N-acetylgalactosaminyltransferase 2 (B3galnt2), found in Mus musculus (Mouse).